Here is a 136-residue protein sequence, read N- to C-terminus: Polyadenylate-binding protein-interacting protein 2B (136 aa).

Over residues 15–25 the composition is skewed to polar residues; sequence NGSSVASTSPS. Disordered stretches follow at residues 15–40 and 107–136; these read NGSS…HEEK and SVGD…GVKY. The segment covering 27 to 40 has biased composition (basic and acidic residues); the sequence is KCKEDQGLNGHEEK.

This sequence belongs to the PAIP2 family. As to quaternary structure, interacts (via central acidic portion and C-terminus) with PABPC1 (via the second and third RRM domains and the C-terminus). In terms of processing, ubiquitinated in vitro. As to expression, expressed at very high levels in pancreas, at high levels in testis and at moderately high levels in brain, heart and lung (at protein level).

In terms of biological role, inhibits translation of capped and polyadenylated mRNAs by displacing PABPC1 from the poly(A) tail. The sequence is that of Polyadenylate-binding protein-interacting protein 2B (Paip2b) from Mus musculus (Mouse).